The chain runs to 237 residues: Phosphoribosylaminoimidazole-succinocarboxamide synthase (237 aa).

The protein belongs to the SAICAR synthetase family.

The enzyme catalyses 5-amino-1-(5-phospho-D-ribosyl)imidazole-4-carboxylate + L-aspartate + ATP = (2S)-2-[5-amino-1-(5-phospho-beta-D-ribosyl)imidazole-4-carboxamido]succinate + ADP + phosphate + 2 H(+). Its pathway is purine metabolism; IMP biosynthesis via de novo pathway; 5-amino-1-(5-phospho-D-ribosyl)imidazole-4-carboxamide from 5-amino-1-(5-phospho-D-ribosyl)imidazole-4-carboxylate: step 1/2. The protein is Phosphoribosylaminoimidazole-succinocarboxamide synthase of Baumannia cicadellinicola subsp. Homalodisca coagulata.